The chain runs to 674 residues: Probable protein phosphatase 2C 66 (674 aa).

Ser125 is subject to Phosphoserine. 2 disordered regions span residues 153–175 and 202–247; these read YSGP…RKKP and KSVI…KQSM. A PPM-type phosphatase domain is found at 244–665; that stretch reads KQSMNSVLDV…DDVSVIVISL (422 aa). Asp282 and Gly283 together coordinate Mn(2+). Positions 373 to 384 are enriched in basic and acidic residues; the sequence is NNKTKSDNRCDQ. Positions 373-392 are disordered; it reads NNKTKSDNRCDQKGSNSTTT. 2 residues coordinate Mn(2+): Asp593 and Asp656.

The protein belongs to the PP2C family. Mg(2+) serves as cofactor. It depends on Mn(2+) as a cofactor. As to expression, expressed at low level in seedlings, roots, leaves, stems, young inflorescences, flowers and siliques.

The protein localises to the nucleus. The enzyme catalyses O-phospho-L-seryl-[protein] + H2O = L-seryl-[protein] + phosphate. It catalyses the reaction O-phospho-L-threonyl-[protein] + H2O = L-threonyl-[protein] + phosphate. The sequence is that of Probable protein phosphatase 2C 66 (PLL2) from Arabidopsis thaliana (Mouse-ear cress).